Consider the following 353-residue polypeptide: Photosystem II protein D1 (353 aa).

Threonine 2 carries the post-translational modification N-acetylthreonine. A Phosphothreonine modification is found at threonine 2. 3 helical membrane-spanning segments follow: residues tyrosine 29 to serine 46, histidine 118 to leucine 133, and tryptophan 142 to alanine 156. Histidine 118 is a binding site for chlorophyll a. Tyrosine 126 lines the pheophytin a pocket. Positions 170 and 189 each coordinate [CaMn4O5] cluster. The helical transmembrane segment at phenylalanine 197–leucine 218 threads the bilayer. Histidine 198 provides a ligand contact to chlorophyll a. A quinone is bound by residues histidine 215 and serine 264–phenylalanine 265. Fe cation is bound at residue histidine 215. Histidine 272 provides a ligand contact to Fe cation. The helical transmembrane segment at phenylalanine 274–leucine 288 threads the bilayer. The [CaMn4O5] cluster site is built by histidine 332, glutamate 333, aspartate 342, and alanine 344. Residues alanine 345–glycine 353 constitute a propeptide that is removed on maturation.

The protein belongs to the reaction center PufL/M/PsbA/D family. As to quaternary structure, PSII is composed of 1 copy each of membrane proteins PsbA, PsbB, PsbC, PsbD, PsbE, PsbF, PsbH, PsbI, PsbJ, PsbK, PsbL, PsbM, PsbT, PsbX, PsbY, PsbZ, Psb30/Ycf12, at least 3 peripheral proteins of the oxygen-evolving complex and a large number of cofactors. It forms dimeric complexes. The D1/D2 heterodimer binds P680, chlorophylls that are the primary electron donor of PSII, and subsequent electron acceptors. It shares a non-heme iron and each subunit binds pheophytin, quinone, additional chlorophylls, carotenoids and lipids. D1 provides most of the ligands for the Mn4-Ca-O5 cluster of the oxygen-evolving complex (OEC). There is also a Cl(-1) ion associated with D1 and D2, which is required for oxygen evolution. The PSII complex binds additional chlorophylls, carotenoids and specific lipids. serves as cofactor. Post-translationally, tyr-161 forms a radical intermediate that is referred to as redox-active TyrZ, YZ or Y-Z. C-terminally processed by CTPA; processing is essential to allow assembly of the oxygen-evolving complex and thus photosynthetic growth.

Its subcellular location is the plastid. The protein localises to the chloroplast thylakoid membrane. It catalyses the reaction 2 a plastoquinone + 4 hnu + 2 H2O = 2 a plastoquinol + O2. In terms of biological role, photosystem II (PSII) is a light-driven water:plastoquinone oxidoreductase that uses light energy to abstract electrons from H(2)O, generating O(2) and a proton gradient subsequently used for ATP formation. It consists of a core antenna complex that captures photons, and an electron transfer chain that converts photonic excitation into a charge separation. The D1/D2 (PsbA/PsbD) reaction center heterodimer binds P680, the primary electron donor of PSII as well as several subsequent electron acceptors. The sequence is that of Photosystem II protein D1 from Landoltia punctata (Dotted duckmeat).